A 198-amino-acid chain; its full sequence is Glycerol-3-phosphate acyltransferase (198 aa).

6 consecutive transmembrane segments (helical) span residues 1 to 21 (MNLL…GYLA), 55 to 75 (VFLL…YLLL), 79 to 99 (WQVA…WLNW), 111 to 131 (IFLG…IIMI), 136 to 156 (IVSL…FLSF), and 158 to 178 (GSNL…LVIW).

This sequence belongs to the PlsY family. Probably interacts with PlsX.

The protein localises to the cell inner membrane. The enzyme catalyses an acyl phosphate + sn-glycerol 3-phosphate = a 1-acyl-sn-glycero-3-phosphate + phosphate. The protein operates within lipid metabolism; phospholipid metabolism. In terms of biological role, catalyzes the transfer of an acyl group from acyl-phosphate (acyl-PO(4)) to glycerol-3-phosphate (G3P) to form lysophosphatidic acid (LPA). This enzyme utilizes acyl-phosphate as fatty acyl donor, but not acyl-CoA or acyl-ACP. The polypeptide is Glycerol-3-phosphate acyltransferase (Prochlorococcus marinus (strain NATL2A)).